The following is a 375-amino-acid chain: Acetylornithine aminotransferase (375 aa).

Pyridoxal 5'-phosphate is bound by residues 93–94 (GT) and phenylalanine 120. Arginine 123 contacts N(2)-acetyl-L-ornithine. Residue 205–208 (DEVQ) participates in pyridoxal 5'-phosphate binding. Position 234 is an N6-(pyridoxal phosphate)lysine (lysine 234). Position 262 (threonine 262) interacts with N(2)-acetyl-L-ornithine. Threonine 263 is a pyridoxal 5'-phosphate binding site.

The protein belongs to the class-III pyridoxal-phosphate-dependent aminotransferase family. ArgD subfamily. Homodimer. Pyridoxal 5'-phosphate serves as cofactor.

The protein resides in the cytoplasm. The catalysed reaction is N(2)-acetyl-L-ornithine + 2-oxoglutarate = N-acetyl-L-glutamate 5-semialdehyde + L-glutamate. The protein operates within amino-acid biosynthesis; L-arginine biosynthesis; N(2)-acetyl-L-ornithine from L-glutamate: step 4/4. This chain is Acetylornithine aminotransferase, found in Staphylococcus epidermidis (strain ATCC 12228 / FDA PCI 1200).